A 99-amino-acid polypeptide reads, in one-letter code: Aspartyl/glutamyl-tRNA(Asn/Gln) amidotransferase subunit C (99 aa).

Belongs to the GatC family. As to quaternary structure, heterotrimer of A, B and C subunits.

The catalysed reaction is L-glutamyl-tRNA(Gln) + L-glutamine + ATP + H2O = L-glutaminyl-tRNA(Gln) + L-glutamate + ADP + phosphate + H(+). It carries out the reaction L-aspartyl-tRNA(Asn) + L-glutamine + ATP + H2O = L-asparaginyl-tRNA(Asn) + L-glutamate + ADP + phosphate + 2 H(+). Allows the formation of correctly charged Asn-tRNA(Asn) or Gln-tRNA(Gln) through the transamidation of misacylated Asp-tRNA(Asn) or Glu-tRNA(Gln) in organisms which lack either or both of asparaginyl-tRNA or glutaminyl-tRNA synthetases. The reaction takes place in the presence of glutamine and ATP through an activated phospho-Asp-tRNA(Asn) or phospho-Glu-tRNA(Gln). The chain is Aspartyl/glutamyl-tRNA(Asn/Gln) amidotransferase subunit C from Albidiferax ferrireducens (strain ATCC BAA-621 / DSM 15236 / T118) (Rhodoferax ferrireducens).